Reading from the N-terminus, the 115-residue chain is U3-lycotoxin-Ls1k (115 aa).

The N-terminal stretch at 1-20 (MKFVLLFGVLLVALFSYSSA) is a signal peptide. The propeptide occupies 21–44 (EMLDDFGQADEDELLSLIEKEEAR). 4 cysteine pairs are disulfide-bonded: Cys-48-Cys-63, Cys-55-Cys-72, Cys-62-Cys-87, and Cys-74-Cys-85.

Belongs to the neurotoxin 19 (CSTX) family. 01 subfamily. In terms of tissue distribution, expressed by the venom gland.

Its subcellular location is the secreted. This is U3-lycotoxin-Ls1k from Lycosa singoriensis (Wolf spider).